The primary structure comprises 417 residues: SNF1 protein kinase subunit beta-3 (417 aa).

Residues 1 to 12 are compositionally biased toward basic and acidic residues; the sequence is MAGDNPENKDAS. The interval 1 to 37 is disordered; it reads MAGDNPENKDASMLDVSDAASNTTINGKHSADSTNEA. Residues Ser12, Ser21, Ser44, and Ser135 each carry the phosphoserine modification. The segment covering 19-37 has biased composition (polar residues); it reads AASNTTINGKHSADSTNEA. 2 disordered regions span residues 64–155 and 250–269; these read SSLI…VEGK and GNEPQQHLAEKKANHVDDSK. The segment covering 118–136 has biased composition (polar residues); the sequence is TGNTLQKMDYQPSQQPDSL. The segment covering 137-149 has biased composition (low complexity); it reads QNQGFQQQQEQQQ. Positions 152 to 342 are kinase-interacting sequence (KIS); required for interaction with SNF1; the sequence is VEGKKGRAMM…DQQQNNHQNM (191 aa). Positions 257-269 are enriched in basic and acidic residues; that stretch reads LAEKKANHVDDSK. Ser276 and Ser279 each carry phosphoserine. The tract at residues 343–417 is association with SNF1 kinase complex (ASC) domain; required for interaction with SNF4; the sequence is AWLTPPQLPP…VTQILYTPLQ (75 aa).

The protein belongs to the 5'-AMP-activated protein kinase beta subunit family. In terms of assembly, component of the SNF1 kinase complex, a heterotrimeric complex composed of the catalytic alpha subunit SNF1, one of the three related beta subunits SIP1, SIP2 or GAL83, and the regulatory gamma subunit SNF4. The beta subunit serves as a bridge between the catalytic and the regulatory subunit. Interacts (via KIS domain) with SNF1. Interacts (via ASC domain) with SNF4. Interacts with REE1. Phosphorylated by SNF1 in vitro.

It localises to the cytoplasm. Its subcellular location is the nucleus. Functionally, beta subunit of the SNF1 kinase complex, which is required for transcriptional, metabolic, and developmental adaptations in response to glucose limitation. Has a structural role, mediating heterotrimer formation, and a regulatory role, defining carbon source-regulated subcellular location and substrate specificity of the SNF1 kinase complex. Promotes the relocalization of the SNF1 kinase complex to the nucleus upon shift to nonfermentable carbon sources. The polypeptide is SNF1 protein kinase subunit beta-3 (GAL83) (Saccharomyces cerevisiae (strain ATCC 204508 / S288c) (Baker's yeast)).